A 256-amino-acid chain; its full sequence is Small ribosomal subunit protein eS1A (256 aa).

Ala-2 bears the N-acetylalanine; partial mark.

It belongs to the eukaryotic ribosomal protein eS1 family. Component of the small ribosomal subunit. Mature ribosomes consist of a small (40S) and a large (60S) subunit. The 40S subunit contains about 33 different proteins and 1 molecule of RNA (18S). The 60S subunit contains about 49 different proteins and 3 molecules of RNA (25S, 5.8S and 5S).

It is found in the cytoplasm. This is Small ribosomal subunit protein eS1A from Clavispora lusitaniae (strain ATCC 42720) (Yeast).